Reading from the N-terminus, the 1198-residue chain is Integrator complex subunit 2 (1198 aa).

Residues 421 to 437 form a helical membrane-spanning segment; that stretch reads FVSLSFCMLLAFSTLVS.

It belongs to the Integrator subunit 2 family. Component of the Integrator complex, composed of core subunits INTS1, INTS2, INTS3, INTS4, INTS5, INTS6, INTS7, INTS8, INTS9/RC74, INTS10, INTS11/CPSF3L, INTS12, INTS13, INTS14 and INTS15. The core complex associates with protein phosphatase 2A subunits PPP2CA and PPP2R1A, to form the Integrator-PP2A (INTAC) complex.

It localises to the nucleus. The protein localises to the nucleus membrane. The protein resides in the cytoplasm. In terms of biological role, component of the integrator complex, a multiprotein complex that terminates RNA polymerase II (Pol II) transcription in the promoter-proximal region of genes. The integrator complex provides a quality checkpoint during transcription elongation by driving premature transcription termination of transcripts that are unfavorably configured for transcriptional elongation: the complex terminates transcription by (1) catalyzing dephosphorylation of the C-terminal domain (CTD) of Pol II subunit POLR2A/RPB1 and SUPT5H/SPT5, (2) degrading the exiting nascent RNA transcript via endonuclease activity and (3) promoting the release of Pol II from bound DNA. The integrator complex is also involved in terminating the synthesis of non-coding Pol II transcripts, such as enhancer RNAs (eRNAs), small nuclear RNAs (snRNAs), telomerase RNAs and long non-coding RNAs (lncRNAs). Mediates recruitment of cytoplasmic dynein to the nuclear envelope, probably as component of the integrator complex. The polypeptide is Integrator complex subunit 2 (Ints2) (Mus musculus (Mouse)).